The following is a 273-amino-acid chain: NADPH-dependent 7-cyano-7-deazaguanine reductase (273 aa).

Substrate is bound at residue 81–83 (VES). 83-84 (SK) provides a ligand contact to NADPH. The active-site Thioimide intermediate is the Cys179. Asp186 serves as the catalytic Proton donor. 218-219 (AE) is a binding site for substrate. 247-248 (RG) is a binding site for NADPH.

The protein belongs to the GTP cyclohydrolase I family. QueF type 2 subfamily. In terms of assembly, homodimer.

It localises to the cytoplasm. It catalyses the reaction 7-aminomethyl-7-carbaguanine + 2 NADP(+) = 7-cyano-7-deazaguanine + 2 NADPH + 3 H(+). Its pathway is tRNA modification; tRNA-queuosine biosynthesis. Functionally, catalyzes the NADPH-dependent reduction of 7-cyano-7-deazaguanine (preQ0) to 7-aminomethyl-7-deazaguanine (preQ1). This Rickettsia akari (strain Hartford) protein is NADPH-dependent 7-cyano-7-deazaguanine reductase.